The sequence spans 668 residues: Cyclin-dependent kinase 11.2 (668 aa).

The interval 1–265 (MSNYSTNGSR…EQWESMTENE (265 aa)) is disordered. Composition is skewed to basic and acidic residues over residues 35 to 73 (KTKEERYRDKEKERDHERHHDRERRDDRYRKVDSRDHRD), 85 to 127 (YCRD…DSLR), and 140 to 163 (LPDDGKLFDRILDPNYKKKEKTVM). Positions 164–181 (EVEDVEMSPVEMLDEEEV) are enriched in acidic residues. Composition is skewed to basic and acidic residues over residues 197-212 (NEPEEKDYKSEGDPES) and 245-265 (PDDKYGKTPDKEQWESMTENE). A Protein kinase domain is found at 304–600 (YVILNVIAEG…ASEALQHDWF (297 aa)). Residues 310–318 (IAEGTYGEV) and K333 each bind ATP. D432 acts as the Proton acceptor in catalysis.

It belongs to the protein kinase superfamily. CMGC Ser/Thr protein kinase family. CDC2/CDKX subfamily. In terms of tissue distribution, expressed in somatic cells and at varying levels throughout the germline (at protein level). Highly expressed in the germ line of hermaphrodites (at protein level).

It localises to the nucleus. Its subcellular location is the cytoplasm. The catalysed reaction is L-seryl-[protein] + ATP = O-phospho-L-seryl-[protein] + ADP + H(+). It carries out the reaction L-threonyl-[protein] + ATP = O-phospho-L-threonyl-[protein] + ADP + H(+). In terms of biological role, probable cyclin-dependent kinase whose activity is most likely regulated by the cyclin cyl-1/Cylin-L. Acts partially redundantly with cdk-11.1 to ensure embryonic viability. In contrast to cdk-11.1, not essential for male and female fertility. The sequence is that of Cyclin-dependent kinase 11.2 from Caenorhabditis elegans.